We begin with the raw amino-acid sequence, 201 residues long: ATP-dependent Clp protease proteolytic subunit (201 aa).

Serine 98 serves as the catalytic Nucleophile. Residue histidine 123 is part of the active site.

Belongs to the peptidase S14 family. As to quaternary structure, fourteen ClpP subunits assemble into 2 heptameric rings which stack back to back to give a disk-like structure with a central cavity, resembling the structure of eukaryotic proteasomes.

It is found in the cytoplasm. The catalysed reaction is Hydrolysis of proteins to small peptides in the presence of ATP and magnesium. alpha-casein is the usual test substrate. In the absence of ATP, only oligopeptides shorter than five residues are hydrolyzed (such as succinyl-Leu-Tyr-|-NHMec, and Leu-Tyr-Leu-|-Tyr-Trp, in which cleavage of the -Tyr-|-Leu- and -Tyr-|-Trp bonds also occurs).. In terms of biological role, cleaves peptides in various proteins in a process that requires ATP hydrolysis. Has a chymotrypsin-like activity. Plays a major role in the degradation of misfolded proteins. The chain is ATP-dependent Clp protease proteolytic subunit from Rickettsia felis (strain ATCC VR-1525 / URRWXCal2) (Rickettsia azadi).